The chain runs to 457 residues: Variant surface glycoprotein 20 (457 aa).

The signal sequence occupies residues 1-20 (MFTQAVIALIGLVSIRTGKT). Over residues 385-397 (RQTASGDDQSAEN) the composition is skewed to polar residues. Residues 385–406 (RQTASGDDQSAENQCGGKKEDE) are disordered. Residue N436 is glycosylated (N-linked (GlcNAc...) asparagine). A lipid anchor (GPI-anchor amidated serine) is attached at S440. The propeptide at 441–457 (NSFVIKKAPLWLAFLLF) is removed in mature form.

Its subcellular location is the cell membrane. In terms of biological role, VSG forms a coat on the surface of the parasite. The trypanosome evades the immune response of the host by expressing a series of antigenically distinct VSGs from an estimated 1000 VSG genes. This is Variant surface glycoprotein 20 from Trypanosoma equiperdum.